The primary structure comprises 451 residues: mRNA cleavage and polyadenylation factor CLP1 (451 aa).

Residues Lys75 and 136-141 (NTGKTA) each bind ATP.

It belongs to the Clp1 family. Clp1 subfamily. As to quaternary structure, component of a pre-mRNA cleavage factor complex. Interacts directly with PCF11.

The protein localises to the nucleus. Its function is as follows. Required for endonucleolytic cleavage during polyadenylation-dependent pre-mRNA 3'-end formation. The sequence is that of mRNA cleavage and polyadenylation factor CLP1 from Candida glabrata (strain ATCC 2001 / BCRC 20586 / JCM 3761 / NBRC 0622 / NRRL Y-65 / CBS 138) (Yeast).